Consider the following 123-residue polypeptide: cAMP-responsive element-binding protein-like 2 (123 aa).

A disordered region spans residues 1 to 24; it reads MDDSKVVGGKVKKPGKRGRKPAKI. Residues 10–21 are compositionally biased toward basic residues; sequence KVKKPGKRGRKP. In terms of domain architecture, bZIP spans 23–86; sequence KIDLKAKLER…MAMDQGKIPS (64 aa). A basic motif region spans residues 29–60; the sequence is KLERSRQSARECRARKKLRYQYLEELVSSRER. The leucine-zipper stretch occupies residues 62-69; the sequence is ICALREEL. The disordered stretch occupies residues 92-123; sequence LTGEEQSKPQQNSSRHPKAGKTDANTNSLVGN. Residues 114 to 123 are compositionally biased toward polar residues; the sequence is DANTNSLVGN.

It belongs to the bZIP family. ATF subfamily. As to quaternary structure, interacts with CREB1; regulates CREB1 phosphorylation, stability and transcriptional activity. Phosphorylated by AMPK. In terms of tissue distribution, widely expressed with higher expression in adipose tissue, skeletal muscle, and liver (at protein level).

It is found in the nucleus. Its function is as follows. Probable regulator of CREB1 transcriptional activity which is involved in adipose cells differentiation. May also play a regulatory role in the cell cycle. The sequence is that of cAMP-responsive element-binding protein-like 2 (Crebl2) from Mus musculus (Mouse).